Here is a 191-residue protein sequence, read N- to C-terminus: Leucyl/phenylalanyl-tRNA--protein transferase (191 aa).

The protein belongs to the L/F-transferase family.

It is found in the cytoplasm. The catalysed reaction is N-terminal L-lysyl-[protein] + L-leucyl-tRNA(Leu) = N-terminal L-leucyl-L-lysyl-[protein] + tRNA(Leu) + H(+). It carries out the reaction N-terminal L-arginyl-[protein] + L-leucyl-tRNA(Leu) = N-terminal L-leucyl-L-arginyl-[protein] + tRNA(Leu) + H(+). It catalyses the reaction L-phenylalanyl-tRNA(Phe) + an N-terminal L-alpha-aminoacyl-[protein] = an N-terminal L-phenylalanyl-L-alpha-aminoacyl-[protein] + tRNA(Phe). Its function is as follows. Functions in the N-end rule pathway of protein degradation where it conjugates Leu, Phe and, less efficiently, Met from aminoacyl-tRNAs to the N-termini of proteins containing an N-terminal arginine or lysine. The sequence is that of Leucyl/phenylalanyl-tRNA--protein transferase from Rubrobacter xylanophilus (strain DSM 9941 / JCM 11954 / NBRC 16129 / PRD-1).